The chain runs to 2548 residues: Unconventional myosin-IXa (2548 aa).

Residues N14–L112 enclose the Ras-associating domain. The Myosin motor domain occupies K146–H1016. A helical transmembrane segment spans residues I175 to Y195. G239–T246 serves as a coordination point for ATP. S755 is subject to Phosphoserine. The segment at L898 to A920 is actin-binding. 5 consecutive IQ domains span residues R1021–H1041, L1042–A1071, M1074–V1103, R1115–L1144, and Q1138–R1167. The neck or regulatory domain stretch occupies residues R1021 to K1162. The interval E1163–K2511 is tail. The span at S1223–E1236 shows a compositional bias: basic and acidic residues. Residues S1223 to V1250 form a disordered region. Phosphoserine occurs at positions 1242 and 1258. Residues Q1264 to K1291 are a coiled coil. Phosphoserine occurs at positions 1299 and 1317. Residues S1299–L1386 are disordered. Composition is skewed to low complexity over residues S1324 to E1337 and F1356 to K1366. S1364 bears the Phosphoserine mark. Positions N1372–S1381 are enriched in polar residues. Positions V1486–T1532 form a coiled coil. A disordered region spans residues Y1804–R1836. Positions C1818 to P1830 are enriched in basic and acidic residues. Position 1948 is a phosphoserine (S1948). 2 Phorbol-ester/DAG-type zinc fingers span residues G1999–C2048 and L2068–S2119. The Rho-GAP domain occupies V2063–Y2251. Phosphoserine is present on S2294. Residues A2315 to E2358 are a coiled coil. Disordered stretches follow at residues P2359 to N2383 and S2401 to D2424. Phosphoserine is present on S2464. The disordered stretch occupies residues R2490–D2531.

This sequence belongs to the TRAFAC class myosin-kinesin ATPase superfamily. Myosin family. Phosphorylated by ALPK1 following monosodium urate monohydrate (MSU)-induced inflammation. In terms of tissue distribution, found to be expressed in testis and placenta and at lower levels in all the examined tissues with the exception of liver. Isoform 5: Found in leukocytes but not in brain, retina or testis.

The protein resides in the membrane. The protein localises to the cytoplasm. Its subcellular location is the synapse. It is found in the cell projection. It localises to the growth cone. In terms of biological role, myosins are actin-based motor molecules with ATPase activity. Unconventional myosins serve in intracellular movements. Regulates Rho by stimulating it's GTPase activity in neurons. Required for the regulation of neurite branching and motor neuron axon guidance. The polypeptide is Unconventional myosin-IXa (MYO9A) (Homo sapiens (Human)).